A 481-amino-acid chain; its full sequence is Sterol 14-alpha demethylase (481 aa).

A helical transmembrane segment spans residues 1–21 (MFIEAIVLALTALILYSVYSV). Cys422 contributes to the heme binding site.

It belongs to the cytochrome P450 family. Heme serves as cofactor.

The protein resides in the membrane. It catalyses the reaction a 14alpha-methyl steroid + 3 reduced [NADPH--hemoprotein reductase] + 3 O2 = a Delta(14) steroid + formate + 3 oxidized [NADPH--hemoprotein reductase] + 4 H2O + 4 H(+). Its pathway is steroid biosynthesis; zymosterol biosynthesis; zymosterol from lanosterol: step 1/6. Its function is as follows. Catalyzes C14-demethylation of lanosterol which is critical for ergosterol biosynthesis. It transforms lanosterol into 4,4'-dimethyl cholesta-8,14,24-triene-3-beta-ol. Favors C4 dimethylated substrates, the substrate preference order is 24-methylenedihydrolanosterol &gt; 24,25-dihydrolanosterol &gt; lanosterol &gt; obtusifoliol &gt; norlanosterol. The polypeptide is Sterol 14-alpha demethylase (Trypanosoma cruzi (strain CL Brener)).